Here is a 115-residue protein sequence, read N- to C-terminus: Large ribosomal subunit protein bL20 (115 aa).

The protein belongs to the bacterial ribosomal protein bL20 family.

Functionally, binds directly to 23S ribosomal RNA and is necessary for the in vitro assembly process of the 50S ribosomal subunit. It is not involved in the protein synthesizing functions of that subunit. The polypeptide is Large ribosomal subunit protein bL20 (Chlorobium chlorochromatii (strain CaD3)).